The sequence spans 77 residues: Large ribosomal subunit protein bL28 (77 aa).

Belongs to the bacterial ribosomal protein bL28 family.

This is Large ribosomal subunit protein bL28 from Albidiferax ferrireducens (strain ATCC BAA-621 / DSM 15236 / T118) (Rhodoferax ferrireducens).